Reading from the N-terminus, the 357-residue chain is 3-dehydroquinate synthase (357 aa).

NAD(+) is bound by residues 69-74, 103-107, 127-128, lysine 140, lysine 149, and 167-170; these read DGEQFK, GVVGD, TT, and CLQT. Zn(2+) contacts are provided by glutamate 182, histidine 245, and histidine 262.

The protein belongs to the sugar phosphate cyclases superfamily. Dehydroquinate synthase family. Co(2+) serves as cofactor. Requires Zn(2+) as cofactor. It depends on NAD(+) as a cofactor.

It is found in the cytoplasm. The enzyme catalyses 7-phospho-2-dehydro-3-deoxy-D-arabino-heptonate = 3-dehydroquinate + phosphate. It participates in metabolic intermediate biosynthesis; chorismate biosynthesis; chorismate from D-erythrose 4-phosphate and phosphoenolpyruvate: step 2/7. Functionally, catalyzes the conversion of 3-deoxy-D-arabino-heptulosonate 7-phosphate (DAHP) to dehydroquinate (DHQ). The chain is 3-dehydroquinate synthase from Idiomarina loihiensis (strain ATCC BAA-735 / DSM 15497 / L2-TR).